The sequence spans 135 residues: Translation initiation factor 2 subunit beta (135 aa).

This sequence belongs to the eIF-2-beta/eIF-5 family. In terms of assembly, heterotrimer composed of an alpha, a beta and a gamma chain.

Its function is as follows. eIF-2 functions in the early steps of protein synthesis by forming a ternary complex with GTP and initiator tRNA. This Methanobrevibacter smithii (strain ATCC 35061 / DSM 861 / OCM 144 / PS) protein is Translation initiation factor 2 subunit beta.